The chain runs to 811 residues: Probable potassium transporter 16 (811 aa).

Over 1 to 66 the chain is Cytoplasmic; sequence MAQQQAGARG…GQESWMRTLR (66 aa). The helical transmembrane segment at 67–87 threads the bilayer; that stretch reads LGFQCVGILHADLGTSPLYVY. Residues 88–100 lie on the Extracellular side of the membrane; the sequence is QNTFKYGIKHEDD. The chain crosses the membrane as a helical span at residues 101–121; sequence IIGVLSLIIYSFVLFTMVKIV. At 122-190 the chain is on the cytoplasmic side; it reads FIALHANDDG…KSQLEKKPAK (69 aa). The helical transmembrane segment at 191 to 211 threads the bilayer; the sequence is IAVFFLTIFATALAISDCVLN. At 212 to 228 the chain is on the extracellular side; the sequence is PSVSVLSAVNGLKLRAP. A helical transmembrane segment spans residues 229–249; it reads HLTTDEVVWITVGILVVFFAV. The Cytoplasmic portion of the chain corresponds to 250 to 256; the sequence is QRFGTDK. The chain crosses the membrane as a helical span at residues 257-277; it reads IGYTFAPVVVVWLLLISGIGI. At 278–310 the chain is on the extracellular side; that stretch reads YDLVKYDVGVLRAFNPKYIIDYFRRNKKDGWVQ. The helical transmembrane segment at 311–331 threads the bilayer; it reads LGEVLLTFTGTEALFADLGYF. The Cytoplasmic segment spans residues 332-337; sequence SIKSIQ. Residues 338 to 358 form a helical membrane-spanning segment; that stretch reads LSSTFVLLPSVLCTYIGQAAY. The Extracellular portion of the chain corresponds to 359 to 379; sequence LRKHMDQQHIQNAFFNSIPRP. A helical membrane pass occupies residues 380 to 400; sequence LFWPMFVLAIMTSVIGCQAMV. The Cytoplasmic portion of the chain corresponds to 401-438; it reads SCAFATMSHLQTLNCFPRIKILHTSRRYSGQLYSPEVN. The chain crosses the membrane as a helical span at residues 439–459; the sequence is FFLCLLSCVITLSFRTTGFIV. Residues 460-463 are Extracellular-facing; the sequence is KAHE. Residues 464 to 484 form a helical membrane-spanning segment; it reads ICVVLVMVITTILMTIVMLLV. The Cytoplasmic portion of the chain corresponds to 485–488; it reads WKVN. Residues 489–509 form a helical membrane-spanning segment; that stretch reads IWWIVLFFVVFMSTETVYLSA. Residues 510 to 519 lie on the Extracellular side of the membrane; sequence VLYKFTKGPY. Residues 520-540 form a helical membrane-spanning segment; the sequence is MPLAMSAVLMVIMFVWHYVHV. At 541–811 the chain is on the cytoplasmic side; the sequence is KRYKFELEHT…LLKVGITYEI (271 aa).

It belongs to the HAK/KUP transporter (TC 2.A.72.3) family.

Its subcellular location is the membrane. In terms of biological role, high-affinity potassium transporter. This Oryza sativa subsp. japonica (Rice) protein is Probable potassium transporter 16 (HAK16).